Here is a 476-residue protein sequence, read N- to C-terminus: Aspartyl/glutamyl-tRNA(Asn/Gln) amidotransferase subunit B (476 aa).

This sequence belongs to the GatB/GatE family. GatB subfamily. Heterotrimer of A, B and C subunits.

It catalyses the reaction L-glutamyl-tRNA(Gln) + L-glutamine + ATP + H2O = L-glutaminyl-tRNA(Gln) + L-glutamate + ADP + phosphate + H(+). It carries out the reaction L-aspartyl-tRNA(Asn) + L-glutamine + ATP + H2O = L-asparaginyl-tRNA(Asn) + L-glutamate + ADP + phosphate + 2 H(+). Functionally, allows the formation of correctly charged Asn-tRNA(Asn) or Gln-tRNA(Gln) through the transamidation of misacylated Asp-tRNA(Asn) or Glu-tRNA(Gln) in organisms which lack either or both of asparaginyl-tRNA or glutaminyl-tRNA synthetases. The reaction takes place in the presence of glutamine and ATP through an activated phospho-Asp-tRNA(Asn) or phospho-Glu-tRNA(Gln). This chain is Aspartyl/glutamyl-tRNA(Asn/Gln) amidotransferase subunit B, found in Shouchella clausii (strain KSM-K16) (Alkalihalobacillus clausii).